Here is a 282-residue protein sequence, read N- to C-terminus: Ubiquinone biosynthesis protein COQ4 homolog, mitochondrial (282 aa).

The transit peptide at 1-30 directs the protein to the mitochondrion; that stretch reads MFVRKSCYSLINATRRCLRYRQLSSTTAGT. Zn(2+)-binding residues include His186, Asp187, His190, and Glu202.

This sequence belongs to the COQ4 family. In terms of assembly, component of a multi-subunit COQ enzyme complex. Zn(2+) is required as a cofactor.

It localises to the mitochondrion inner membrane. It catalyses the reaction a 4-hydroxy-3-methoxy-5-(all-trans-polyprenyl)benzoate + H(+) = a 2-methoxy-6-(all-trans-polyprenyl)phenol + CO2. It participates in cofactor biosynthesis; ubiquinone biosynthesis. Lyase that catalyzes the C1-decarboxylation of 4-hydroxy-3-methoxy-5-(all-trans-polyprenyl)benzoic acid into 2-methoxy-6-(all-trans-polyprenyl)phenol during ubiquinone biosynthesis. The sequence is that of Ubiquinone biosynthesis protein COQ4 homolog, mitochondrial from Anopheles gambiae (African malaria mosquito).